Here is a 279-residue protein sequence, read N- to C-terminus: Release factor glutamine methyltransferase (279 aa).

Residues 118–122 (GTGSG), D141, and N182 each bind S-adenosyl-L-methionine. 182 to 185 (NPPY) serves as a coordination point for substrate.

It belongs to the protein N5-glutamine methyltransferase family. PrmC subfamily.

It catalyses the reaction L-glutaminyl-[peptide chain release factor] + S-adenosyl-L-methionine = N(5)-methyl-L-glutaminyl-[peptide chain release factor] + S-adenosyl-L-homocysteine + H(+). Methylates the class 1 translation termination release factors RF1/PrfA and RF2/PrfB on the glutamine residue of the universally conserved GGQ motif. This chain is Release factor glutamine methyltransferase, found in Streptococcus pneumoniae (strain ATCC BAA-255 / R6).